The chain runs to 294 residues: Putative isocitrate dehydrogenase [NAD] subunit-like 4 (294 aa).

Belongs to the isocitrate and isopropylmalate dehydrogenases family.

Performs an essential role in the oxidative function of the citric acid cycle. The chain is Putative isocitrate dehydrogenase [NAD] subunit-like 4 (IDH4) from Arabidopsis thaliana (Mouse-ear cress).